We begin with the raw amino-acid sequence, 138 residues long: Superoxide dismutase [Mn] (138 aa).

His-1, His-49, Asp-133, and His-137 together coordinate Mn(2+).

This sequence belongs to the iron/manganese superoxide dismutase family. The cofactor is Mn(2+).

The enzyme catalyses 2 superoxide + 2 H(+) = H2O2 + O2. Functionally, destroys superoxide anion radicals which are normally produced within the cells and which are toxic to biological systems. In Mycobacterium celatum, this protein is Superoxide dismutase [Mn] (sodA).